A 274-amino-acid polypeptide reads, in one-letter code: Trypsin-1 (274 aa).

Residues 1 to 18 (MSNKIAILLAVLVAVVAC) form the signal peptide. A propeptide spans 19–47 (AEAQANQRHRLVRPSPSFSPRPRYAVGQR) (activation peptide). Residues 48–273 (IVGGFEIDVS…VRDWVRENSG (226 aa)) form the Peptidase S1 domain. An intrachain disulfide couples C73 to C89. Active-site charge relay system residues include H88 and D133. 2 cysteine pairs are disulfide-bonded: C198-C214 and C225-C249. S229 functions as the Charge relay system in the catalytic mechanism.

The protein belongs to the peptidase S1 family. Constitutively expressed at low level in the gut of adult females. Also expressed in the gut of male and female pupae.

It is found in the secreted. It catalyses the reaction Preferential cleavage: Arg-|-Xaa, Lys-|-Xaa.. In terms of biological role, major function may be to aid in digestion of the blood meal. The protein is Trypsin-1 (TRYP1) of Anopheles gambiae (African malaria mosquito).